The sequence spans 511 residues: MAETSRELPLSTLTASTRRALRIRARQAREAKLSVLSKVCYAIGGAPNQVSGSASAFFLQIYLLDVALISPYQASLVLSLGKTWGGITDPIVGYCISKSKWTRIGRLMPWMLGCTPFLVVSYFLLWFVPTFETGRVLWYLAFFSCFQALSTAYHVPYTTLTMFLSTDQMERDSATAYRMTVEVLGTLIGAAVQGQIVASAHTGSHCNVTNMTGNLTADFLYEPTEYITSARQVYMIAAGIIGCLYLLCISVLFLGVKERDDPYALVAGKVIPFFKGFRETMQFGPYLNLISSFLLISAAVQIQQSNFVLFCTHAADLQDHFQNLVLTILIAAVLSIPFWQWFLQKFGKKMAAFGISLMIPFSIMLVTISSLVVAYVVAVASGLSIAASLLLPWSMLPDVVDNFRLTNPQGKGLEAIFYSSFVFFTKLSAGIALGISTLSLQFADYNTSLCKQSYSVVLTLKLLIGAAPALMIIIGLTILAFYPITEDTRKETELALDVIRMRTRRSTLIVI.

Transmembrane regions (helical) follow at residues Met-108–Val-128, Val-136–Pro-156, Ile-236–Val-256, Thr-280–Val-300, Asn-323–Leu-343, Leu-357–Val-377, Val-379–Val-399, Ala-415–Ile-435, and Leu-462–Tyr-482.

The protein belongs to the major facilitator superfamily.

It is found in the cell membrane. It catalyses the reaction sphing-4-enine 1-phosphate(in) = sphing-4-enine 1-phosphate(out). The enzyme catalyses sphinganine 1-phosphate(in) = sphinganine 1-phosphate(out). The catalysed reaction is sphinga-4E,14Z-dienine-1-phosphate(in) = sphinga-4E,14Z-dienine-1-phosphate(out). Its function is as follows. Lipid transporter that specifically mediates export of sphingosine-1-phosphate in red blood cells and platelets. Sphingosine-1-phosphate is a signaling sphingolipid and its export from red blood cells into in the plasma is required for red blood cell morphology. Sphingosine-1-phosphate export from platelets is required for platelet aggregation and thrombus formation. In addition to export, also able to mediate S1P import. This chain is Sphingosine-1-phosphate transporter MFSD2B, found in Xenopus tropicalis (Western clawed frog).